We begin with the raw amino-acid sequence, 381 residues long: Putative 8-amino-7-oxononanoate synthase (381 aa).

Arg-22 contributes to the substrate binding site. 109-110 is a pyridoxal 5'-phosphate binding site; sequence GF. His-134 contributes to the substrate binding site. Pyridoxal 5'-phosphate is bound by residues Ser-182, 207 to 210, and 233 to 236; these read DDAH and TLSK. Lys-236 is modified (N6-(pyridoxal phosphate)lysine). Thr-345 is a substrate binding site.

Belongs to the class-II pyridoxal-phosphate-dependent aminotransferase family. BioF subfamily. As to quaternary structure, homodimer. The cofactor is pyridoxal 5'-phosphate.

The catalysed reaction is 6-carboxyhexanoyl-[ACP] + L-alanine + H(+) = (8S)-8-amino-7-oxononanoate + holo-[ACP] + CO2. Its pathway is cofactor biosynthesis; biotin biosynthesis. Its function is as follows. Catalyzes the decarboxylative condensation of pimeloyl-[acyl-carrier protein] and L-alanine to produce 8-amino-7-oxononanoate (AON), [acyl-carrier protein], and carbon dioxide. The polypeptide is Putative 8-amino-7-oxononanoate synthase (bioF) (Acidiphilium cryptum (strain JF-5)).